The sequence spans 386 residues: 1-deoxy-D-xylulose 5-phosphate reductoisomerase (386 aa).

Residues Ser10, Gly11, Ser12, Val13, Asn38, and Asn120 each contribute to the NADPH site. Lys121 provides a ligand contact to 1-deoxy-D-xylulose 5-phosphate. Glu122 contacts NADPH. Asp146 lines the Mn(2+) pocket. The 1-deoxy-D-xylulose 5-phosphate site is built by Ser147, Glu148, Ser172, and His195. A Mn(2+)-binding site is contributed by Glu148. Gly201 is an NADPH binding site. 1-deoxy-D-xylulose 5-phosphate is bound by residues Ser208, Asn213, Lys214, and Glu217. Glu217 lines the Mn(2+) pocket.

The protein belongs to the DXR family. The cofactor is Mg(2+). Mn(2+) serves as cofactor.

The catalysed reaction is 2-C-methyl-D-erythritol 4-phosphate + NADP(+) = 1-deoxy-D-xylulose 5-phosphate + NADPH + H(+). The protein operates within isoprenoid biosynthesis; isopentenyl diphosphate biosynthesis via DXP pathway; isopentenyl diphosphate from 1-deoxy-D-xylulose 5-phosphate: step 1/6. Functionally, catalyzes the NADPH-dependent rearrangement and reduction of 1-deoxy-D-xylulose-5-phosphate (DXP) to 2-C-methyl-D-erythritol 4-phosphate (MEP). The chain is 1-deoxy-D-xylulose 5-phosphate reductoisomerase from Leptospira biflexa serovar Patoc (strain Patoc 1 / Ames).